A 399-amino-acid chain; its full sequence is Lipase member K (399 aa).

Residues 1–19 (MWQLLAAACWMLLLGSMYG) form the signal peptide. An AB hydrolase-1 domain is found at 78-378 (PAVYLQHGLI…HYNHVDFYLG (301 aa)). Ser-172 functions as the Nucleophile in the catalytic mechanism. A disulfide bridge connects residues Cys-246 and Cys-255. N-linked (GlcNAc...) asparagine glycosylation is found at Asn-271 and Asn-327. Catalysis depends on charge relay system residues Asp-343 and His-372.

This sequence belongs to the AB hydrolase superfamily. Lipase family. In terms of tissue distribution, exclusively expressed in the epidermis within the granular keratinocytes.

It localises to the secreted. In terms of biological role, plays a highly specific role in the last step of keratinocyte differentiation. May have an essential function in lipid metabolism of the most differentiated epidermal layers. The protein is Lipase member K (LIPK) of Homo sapiens (Human).